The sequence spans 241 residues: Carboxy-S-adenosyl-L-methionine synthase (241 aa).

Residues Tyr38, 63 to 65, 88 to 89, 116 to 117, Asn131, and Arg198 each bind S-adenosyl-L-methionine; these read GCS, DN, and DI.

This sequence belongs to the class I-like SAM-binding methyltransferase superfamily. Cx-SAM synthase family. Homodimer.

The enzyme catalyses prephenate + S-adenosyl-L-methionine = carboxy-S-adenosyl-L-methionine + 3-phenylpyruvate + H2O. Catalyzes the conversion of S-adenosyl-L-methionine (SAM) to carboxy-S-adenosyl-L-methionine (Cx-SAM). This Histophilus somni (strain 2336) (Haemophilus somnus) protein is Carboxy-S-adenosyl-L-methionine synthase.